The sequence spans 1891 residues: TATA-binding protein-associated factor mot1 (1891 aa).

Residues 30–68 form an HEAT 1 repeat; that stretch reads PDELFNLLGRILPYLRSKSWDTRAAAAKAIGLIVANADT. Disordered regions lie at residues 184-216, 241-283, and 295-316; these read FVASREHSIQGTSQPLASPIEPANGEESGLSKR, LSSR…LDRS, and FKGASVPENPLLQPESTEEGPN. Basic and acidic residues predominate over residues 264–275; the sequence is ENGEERNGDSKP. HEAT repeat units lie at residues 473-511 and 569-606; these read SKLMDGVLEAVMKGLGDYDDDVRAVSAATLVPIAEEFVK and SSFGKLVPRLYPFLRHTITSVRSAVLRALMTFLQLEGE. A compositionally biased stretch (low complexity) spans 699–710; the sequence is SAAAPARSSPAS. Residues 699-740 are disordered; it reads SAAAPARSSPASNTPEGTKGRRRKSEKKEAPPPSAHNVDGHM. 4 HEAT repeats span residues 957 to 996, 1139 to 1177, 1181 to 1216, and 1219 to 1257; these read PKKPSHIIKGMMDSIKKEENAELQQRSATAITSLVEYYTT, YPWVVDLLPLVVKALQCKLSVIRYAAAKCFATICSVITV, TMLVEKVLPMINDALDVHHRQGAVECIYHLIHVMED, and LPYVIFLVVPVLGRMSDSDNEVRLLATTSFATLVKLVPL. A Helicase ATP-binding domain is found at 1316–1489; sequence AFLNRYNLHG…WSLFDFLMPG (174 aa). 1329–1336 lines the ATP pocket; it reads DDMGLGKT. Residues 1440-1443 carry the DEAH box motif; the sequence is DEGH. The HEAT 8 repeat unit spans residues 1526–1565; that stretch reads EALHKQVLPFLLRRLKEEVLNDLPPKIIQNYYCDPSELQR. Residues 1663–1813 enclose the Helicase C-terminal domain; it reads DLSGASYVSP…STVVNQQNAG (151 aa).

This sequence belongs to the SNF2/RAD54 helicase family. In terms of assembly, forms the NCT transcriptional regulatory complex with nctA and nctB.

It is found in the nucleus. Its function is as follows. Regulates transcription in association with TATA binding protein (TBP). Removes TBP from the TATA box via its C-terminal ATPase activity. Both transcription activation and repression require its ATPase activity. Part of the NCT transcriptional regulatory complex that acts as a key regulator of ergosterol biosynthesis and the azole exporter cdr1B. The NCT complex binds the promoters of genes linked to azole susceptibility, and especially represses the expression of cdr1B transporter. The chain is TATA-binding protein-associated factor mot1 from Aspergillus fumigatus (strain CBS 144.89 / FGSC A1163 / CEA10) (Neosartorya fumigata).